The primary structure comprises 378 residues: Protein FAM185A (378 aa).

In Mus musculus (Mouse), this protein is Protein FAM185A (Fam185a).